We begin with the raw amino-acid sequence, 359 residues long: MGVEQILKRKTGVIVGEDVHNLFTYAKEHKFAIPAINVTSSSTAVAALEAARDSKSPIILQTSNGGAAYFAGKGISNEGQNASIKGAIAAAHYIRSIAPAYGIPVVLHSDHCAKKLLPWFDGMLEADEAYFKEHGEPLFSSHMLDLSEETDEENISTCVKYFKRMAAMDQWLEMEIGITGGEEDGVNNENADKEDLYTKPEQVYNVYKALHPISPNFSIAAAFGNCHGLYAGDIALRPEILAEHQKYTREQVGCKEEKPLFLVFHGGSGSTVQEFHTGIDNGVVKVNLDTDCQYAYLTGIRDYVLNKKDYIMSPVGNPEGPEKPNKKFFDPRVWVREGEKTMGAKITKSLETFRTTNTL.

Threonine 11 bears the Phosphothreonine mark. A Glycyl lysine isopeptide (Lys-Gly) (interchain with G-Cter in ubiquitin) cross-link involves residue lysine 27. Serine 56 and serine 63 each carry phosphoserine. Serine 63 lines the D-glyceraldehyde 3-phosphate pocket. A Glycyl lysine isopeptide (Lys-Gly) (interchain with G-Cter in ubiquitin) cross-link involves residue lysine 73. Phosphoserine is present on residues serine 76 and serine 83. A Glycyl lysine isopeptide (Lys-Gly) (interchain with G-Cter in ubiquitin) cross-link involves residue lysine 85. Position 96 is a phosphoserine (serine 96). Aspartate 110 acts as the Proton donor in catalysis. 2 residues coordinate Zn(2+): histidine 111 and aspartate 145. Serine 147 is modified (phosphoserine). The residue at position 150 (threonine 150) is a Phosphothreonine. Zn(2+) is bound at residue glutamate 175. Phosphothreonine is present on threonine 179. A Zn(2+)-binding site is contributed by histidine 227. A dihydroxyacetone phosphate-binding site is contributed by glycine 228. A Zn(2+)-binding site is contributed by histidine 265. Dihydroxyacetone phosphate is bound by residues 266-268 and 287-290; these read GGS and NLDT. A Phosphoserine modification is found at serine 268. Threonine 290 bears the Phosphothreonine mark. A Glycyl lysine isopeptide (Lys-Gly) (interchain with G-Cter in ubiquitin) cross-link involves residue lysine 308. Residue tyrosine 310 is modified to Phosphotyrosine. The residue at position 313 (serine 313) is a Phosphoserine.

The protein belongs to the class II fructose-bisphosphate aldolase family. In terms of assembly, homodimer. It depends on Zn(2+) as a cofactor.

It catalyses the reaction beta-D-fructose 1,6-bisphosphate = D-glyceraldehyde 3-phosphate + dihydroxyacetone phosphate. It participates in carbohydrate degradation; glycolysis; D-glyceraldehyde 3-phosphate and glycerone phosphate from D-glucose: step 4/4. In terms of biological role, catalyzes the aldol condensation of dihydroxyacetone phosphate (DHAP or glycerone-phosphate) with glyceraldehyde 3-phosphate (G3P) to form fructose 1,6-bisphosphate (FBP) in gluconeogenesis and the reverse reaction in glycolysis. The polypeptide is Fructose-bisphosphate aldolase (FBA1) (Saccharomyces cerevisiae (strain ATCC 204508 / S288c) (Baker's yeast)).